Consider the following 579-residue polypeptide: Zinc finger protein 248 (579 aa).

The 72-residue stretch at 8 to 79 (VSFKDVCVDF…EKGFPSQCHP (72 aa)) folds into the KRAB domain. A C2H2-type 1; degenerate zinc finger spans residues 240–264 (TVCKYNECGRTFIESLKLNISQRPH). Residue lysine 341 forms a Glycyl lysine isopeptide (Lys-Gly) (interchain with G-Cter in SUMO2) linkage. 7 consecutive C2H2-type zinc fingers follow at residues 380–402 (FECGECGKTFWEKSNLTQHQRTH), 408–430 (YECTECGKAFCQKPHLTNHQRTH), 436–458 (YECKQCGKTFCVKSNLTEHQRTH), 464–486 (YECNACGKSFCHRSALTVHQRTH), 492–514 (FICNECGKSFCVKSNLIVHQRTH), 520–543 (YKCNECGKTFCEKSALTKHQRTHT), and 548–570 (YECNACGKTFSQRSVLTKHQRIH).

The protein belongs to the krueppel C2H2-type zinc-finger protein family.

The protein resides in the nucleus. Functionally, may be involved in transcriptional regulation. This Homo sapiens (Human) protein is Zinc finger protein 248 (ZNF248).